Reading from the N-terminus, the 722-residue chain is Dual specificity tyrosine-phosphorylation-regulated kinase 2 (722 aa).

At Ser-25 the chain carries Phosphoserine. The segment at 54–127 (TTTSLNGNGN…SGELKCNTPM (74 aa)) is disordered. Over residues 66–119 (GNSNSNNNNNIGSPVSSSTTNSSNGGNERGSSTKSNSSSGSGSSGNSASSTGSG) the composition is skewed to low complexity. A Protein kinase domain is found at 198-494 (YEILEVIGKG…PDEAAHHEFL (297 aa)). ATP is bound by residues 204 to 212 (IGKGSFGQV) and Lys-227. The active-site Proton acceptor is Asp-324. A phosphotyrosine; by autocatalysis mark is found at Tyr-356 and Tyr-358. Disordered stretches follow at residues 494 to 519 (LQPS…LNSV), 557 to 582 (TTKS…PDIK), 624 to 643 (GSGS…LPGT), and 679 to 722 (TTTH…FGRA). Positions 506 to 519 (RMSSSSSSSGLNSV) are enriched in low complexity. Positions 557 to 576 (TTKSRQQPPSQSHGHAQSNG) are enriched in polar residues. Low complexity-rich tracts occupy residues 626 to 635 (GSTHHVSSAA) and 689 to 707 (GQQQ…MSHS).

The protein belongs to the protein kinase superfamily. CMGC Ser/Thr protein kinase family. MNB/DYRK subfamily. Mg(2+) is required as a cofactor. In terms of processing, phosphorylated on serine/threonine residues.

The protein localises to the cytoplasm. It carries out the reaction L-seryl-[protein] + ATP = O-phospho-L-seryl-[protein] + ADP + H(+). The catalysed reaction is L-threonyl-[protein] + ATP = O-phospho-L-threonyl-[protein] + ADP + H(+). The enzyme catalyses L-tyrosyl-[protein] + ATP = O-phospho-L-tyrosyl-[protein] + ADP + H(+). Autophosphorylates on Tyr-356 and Tyr-358. Its function is as follows. In vitro; can phosphorylate exogenous substrates on Ser and Thr residues. May have a physiological role in development being involved in cellular growth and differentiation. This chain is Dual specificity tyrosine-phosphorylation-regulated kinase 2, found in Drosophila melanogaster (Fruit fly).